The sequence spans 473 residues: Trigger factor (473 aa).

Residues 174–261 (GDIAVVSFKG…LKDLKEKELP (88 aa)) enclose the PPIase FKBP-type domain. The tract at residues 442–473 (ATKLTTKTTTKATTKKGVKTKSKPKVNKKEKN) is disordered. Positions 444 to 453 (KLTTKTTTKA) are enriched in low complexity. Residues 454–467 (TTKKGVKTKSKPKV) are compositionally biased toward basic residues.

Belongs to the FKBP-type PPIase family. Tig subfamily.

The protein localises to the cytoplasm. It catalyses the reaction [protein]-peptidylproline (omega=180) = [protein]-peptidylproline (omega=0). Its function is as follows. Involved in protein export. Acts as a chaperone by maintaining the newly synthesized protein in an open conformation. Functions as a peptidyl-prolyl cis-trans isomerase. This chain is Trigger factor, found in Prochlorococcus marinus subsp. pastoris (strain CCMP1986 / NIES-2087 / MED4).